The primary structure comprises 557 residues: Dihydroxy-acid dehydratase (557 aa).

Mg(2+) is bound at residue D78. Residue C119 participates in [2Fe-2S] cluster binding. Mg(2+) contacts are provided by D120 and K121. An N6-carboxylysine modification is found at K121. Position 192 (C192) interacts with [2Fe-2S] cluster. E442 provides a ligand contact to Mg(2+). S468 serves as the catalytic Proton acceptor.

This sequence belongs to the IlvD/Edd family. As to quaternary structure, homodimer. [2Fe-2S] cluster serves as cofactor. Requires Mg(2+) as cofactor.

The enzyme catalyses (2R)-2,3-dihydroxy-3-methylbutanoate = 3-methyl-2-oxobutanoate + H2O. It carries out the reaction (2R,3R)-2,3-dihydroxy-3-methylpentanoate = (S)-3-methyl-2-oxopentanoate + H2O. Its pathway is amino-acid biosynthesis; L-isoleucine biosynthesis; L-isoleucine from 2-oxobutanoate: step 3/4. The protein operates within amino-acid biosynthesis; L-valine biosynthesis; L-valine from pyruvate: step 3/4. Functionally, functions in the biosynthesis of branched-chain amino acids. Catalyzes the dehydration of (2R,3R)-2,3-dihydroxy-3-methylpentanoate (2,3-dihydroxy-3-methylvalerate) into 2-oxo-3-methylpentanoate (2-oxo-3-methylvalerate) and of (2R)-2,3-dihydroxy-3-methylbutanoate (2,3-dihydroxyisovalerate) into 2-oxo-3-methylbutanoate (2-oxoisovalerate), the penultimate precursor to L-isoleucine and L-valine, respectively. In Bacillus cereus (strain G9842), this protein is Dihydroxy-acid dehydratase.